The following is a 97-amino-acid chain: Protein RnfH (97 aa).

It belongs to the UPF0125 (RnfH) family.

This Aliivibrio salmonicida (strain LFI1238) (Vibrio salmonicida (strain LFI1238)) protein is Protein RnfH.